A 1038-amino-acid chain; its full sequence is Elongation factor 3 (1038 aa).

HEAT repeat units follow at residues 93–131 (EAYLLPLLSVFLDLLGDKKPTVRPVAQEAALTIISSANK), 133–170 (STIRILPILFDGLDRSKKWQTKKGALDLIAELSKVAPY), 174–211 (RCLPDIIPQVTDCMWDTRKEVKVAARDTMTKVCNVVGN), 213–249 (DIEPFIPALVSCLANPTEVPECTHKLASTTFVKTVEA), 255–287 (MEPLLKRALAEGKTAVKRQAAVIIDNMCKLMDD), and 292–331 (QLFIPKLLPGLKKVIETQADPECREVATRAHETLFVAGGS). Glu-406 is a binding site for ADP. ABC transporter domains follow at residues 426-654 (IFIE…YYEL) and 680-995 (IRLT…EEVT). 4 residues coordinate ADP: Asn-716, Glu-924, Asn-927, and His-953. The tract at residues 1012-1038 (RKEKKAKDKARKEAEARGEYYSDSDEE) is disordered. Basic and acidic residues predominate over residues 1021 to 1031 (ARKEAEARGEY).

The protein belongs to the ABC transporter superfamily. ABCF family. EF3 subfamily. As to quaternary structure, monomer.

The protein localises to the cytoplasm. The enzyme catalyses ATP + H2O = ADP + phosphate + H(+). It functions in the pathway protein biosynthesis; polypeptide chain elongation. Its function is as follows. Ribosome-dependent ATPase that functions in cytoplasmic translation elongation. Required for the ATP-dependent release of deacylated tRNA from the ribosomal E-site during protein biosynthesis. Stimulates the eEF1A-dependent binding of aminoacyl-tRNA to the ribosomal A-site, which has reduced affinity for tRNA as long as the E-site is occupied. Assists translation termination by stimulating the release of nascent protein from the ribosome by release factors. This chain is Elongation factor 3, found in Phytophthora infestans (strain T30-4) (Potato late blight agent).